Here is a 310-residue protein sequence, read N- to C-terminus: p-hydroxybenzoic acid efflux pump subunit AaeA (310 aa).

A helical transmembrane segment spans residues 12–32; sequence AITLVLVILAFIAIFRAWVYY.

Belongs to the membrane fusion protein (MFP) (TC 8.A.1) family.

The protein localises to the cell inner membrane. Functionally, forms an efflux pump with AaeB. This Escherichia fergusonii (strain ATCC 35469 / DSM 13698 / CCUG 18766 / IAM 14443 / JCM 21226 / LMG 7866 / NBRC 102419 / NCTC 12128 / CDC 0568-73) protein is p-hydroxybenzoic acid efflux pump subunit AaeA.